The following is a 242-amino-acid chain: Ribonuclease 3 2 (242 aa).

Positions L12–S137 constitute an RNase III domain. Residue E51 participates in Mg(2+) binding. The active site involves D55. Mg(2+) is bound by residues D123 and E126. E126 is a catalytic residue. Residues N165–P235 form the DRBM domain.

It belongs to the ribonuclease III family. As to quaternary structure, homodimer. The cofactor is Mg(2+).

It is found in the cytoplasm. It carries out the reaction Endonucleolytic cleavage to 5'-phosphomonoester.. Digests double-stranded RNA. Involved in the processing of primary rRNA transcript to yield the immediate precursors to the large and small rRNAs (23S and 16S). Processes some mRNAs, and tRNAs when they are encoded in the rRNA operon. Processes pre-crRNA and tracrRNA of type II CRISPR loci if present in the organism. This is Ribonuclease 3 2 (rnc2) from Nostoc sp. (strain PCC 7120 / SAG 25.82 / UTEX 2576).